Reading from the N-terminus, the 123-residue chain is Small ribosomal subunit protein uS12 (123 aa).

D89 bears the 3-methylthioaspartic acid mark.

This sequence belongs to the universal ribosomal protein uS12 family. In terms of assembly, part of the 30S ribosomal subunit. Contacts proteins S8 and S17. May interact with IF1 in the 30S initiation complex.

With S4 and S5 plays an important role in translational accuracy. In terms of biological role, interacts with and stabilizes bases of the 16S rRNA that are involved in tRNA selection in the A site and with the mRNA backbone. Located at the interface of the 30S and 50S subunits, it traverses the body of the 30S subunit contacting proteins on the other side and probably holding the rRNA structure together. The combined cluster of proteins S8, S12 and S17 appears to hold together the shoulder and platform of the 30S subunit. In Rhodospirillum centenum (strain ATCC 51521 / SW), this protein is Small ribosomal subunit protein uS12.